The sequence spans 61 residues: Putative neurotoxin-D (61 aa).

Positions 1 to 19 are cleaved as a signal peptide; it reads MRTTVAILLVLFALSAILA. Disulfide bonds link C31-C51, C37-C56, and C39-C58.

In terms of tissue distribution, expressed by the venom gland.

It is found in the secreted. The sequence is that of Putative neurotoxin-D from Lychas mucronatus (Chinese swimming scorpion).